The sequence spans 927 residues: Probable UDP-N-acetylglucosamine--peptide N-acetylglucosaminyltransferase SPINDLY (927 aa).

A disordered region spans residues 1–31 (MGRPGMDSSEGRESNGVVPERNGGAVPAKQQ). TPR repeat units lie at residues 34–67 (GKDT…DEAN), 68–101 (VEAL…DPGN), 102–135 (ACAL…DPSY), 143–176 (AIVL…DSHY), 177–210 (APAY…RPLY), 211–244 (AEAY…SPNF), 252–285 (AIAL…NWHY), 286–319 (ADAM…NPRC), 320–353 (AEAC…KPNF), 355–387 (QSLN…NSTY), and 388–421 (AEAY…DPDS). Residues 422 to 927 (RNAGQNRLLA…KVEANGHISR (506 aa)) form a catalytic region region.

This sequence belongs to the glycosyltransferase 41 family. O-GlcNAc transferase subfamily.

The protein localises to the nucleus. It catalyses the reaction L-seryl-[protein] + UDP-N-acetyl-alpha-D-glucosamine = 3-O-(N-acetyl-beta-D-glucosaminyl)-L-seryl-[protein] + UDP + H(+). The catalysed reaction is L-threonyl-[protein] + UDP-N-acetyl-alpha-D-glucosamine = 3-O-(N-acetyl-beta-D-glucosaminyl)-L-threonyl-[protein] + UDP + H(+). Its pathway is protein modification; protein glycosylation. Its function is as follows. Probable O-linked N-acetylglucosamine transferase (OGT) involved in various processes such as gibberellin (GA) signaling pathway. OGTs catalyze the addition of nucleotide-activated sugars directly onto the polypeptide through O-glycosidic linkage with the hydroxyl of serine or threonine. Probably acts by adding O-linked sugars to yet unknown proteins. The sequence is that of Probable UDP-N-acetylglucosamine--peptide N-acetylglucosaminyltransferase SPINDLY (SPY) from Oryza sativa subsp. japonica (Rice).